Consider the following 860-residue polypeptide: Glucans biosynthesis glucosyltransferase H (860 aa).

6 helical membrane passes run 141 to 161 (FILLLLMLAQTSVATYYMKGI), 187 to 207 (VLPYVIQFGILALFAILFCWV), 515 to 535 (VFLTGVMSYLSAPLWFFFLVL), 572 to 592 (LFSTTLTLLFLPKLLSVMLIW), 599 to 619 (FGGVIRVTLSMLLEMFFSVLL), and 682 to 702 (FLWWLSPIVGSLMLSIPVSVI).

The protein belongs to the glycosyltransferase 2 family. OpgH subfamily.

It is found in the cell inner membrane. It functions in the pathway glycan metabolism; osmoregulated periplasmic glucan (OPG) biosynthesis. Its function is as follows. Involved in the biosynthesis of osmoregulated periplasmic glucans (OPGs). The protein is Glucans biosynthesis glucosyltransferase H of Pseudomonas paraeruginosa (strain DSM 24068 / PA7) (Pseudomonas aeruginosa (strain PA7)).